Reading from the N-terminus, the 103-residue chain is V-type ATP synthase subunit F (103 aa).

Belongs to the V-ATPase F subunit family.

Its function is as follows. Produces ATP from ADP in the presence of a proton gradient across the membrane. The polypeptide is V-type ATP synthase subunit F (Clostridium botulinum (strain Alaska E43 / Type E3)).